Here is a 360-residue protein sequence, read N- to C-terminus: Putative transcription factor A494R (360 aa).

A zinc finger spans residues 153-175 (CTCGGQMELWVNSTQSDLVCNEC).

Belongs to the nucleo-cytoplasmic large DNA viruses (NCLDVs) VLTF-3 family.

In terms of biological role, putative transcription factor. This chain is Putative transcription factor A494R, found in Paramecium bursaria Chlorella virus 1 (PBCV-1).